Consider the following 483-residue polypeptide: Glycogen synthase (483 aa).

An ADP-alpha-D-glucose-binding site is contributed by Lys15.

Belongs to the glycosyltransferase 1 family. Bacterial/plant glycogen synthase subfamily.

The enzyme catalyses [(1-&gt;4)-alpha-D-glucosyl](n) + ADP-alpha-D-glucose = [(1-&gt;4)-alpha-D-glucosyl](n+1) + ADP + H(+). The protein operates within glycan biosynthesis; glycogen biosynthesis. Its function is as follows. Synthesizes alpha-1,4-glucan chains using ADP-glucose. This chain is Glycogen synthase, found in Thioalkalivibrio sulfidiphilus (strain HL-EbGR7).